Reading from the N-terminus, the 299-residue chain is ATP synthase gamma chain (299 aa).

It belongs to the ATPase gamma chain family. In terms of assembly, F-type ATPases have 2 components, CF(1) - the catalytic core - and CF(0) - the membrane proton channel. CF(1) has five subunits: alpha(3), beta(3), gamma(1), delta(1), epsilon(1). CF(0) has three main subunits: a, b and c.

It is found in the cell membrane. Its function is as follows. Produces ATP from ADP in the presence of a proton gradient across the membrane. The gamma chain is believed to be important in regulating ATPase activity and the flow of protons through the CF(0) complex. In Leifsonia xyli subsp. xyli (strain CTCB07), this protein is ATP synthase gamma chain.